A 270-amino-acid polypeptide reads, in one-letter code: MIQFNEDIRSLSFAEIKEEIHKLSIVDLYRNDEHTKLINWLEEDKRKNVLSLKEKIEKDLESYLNEVKRVKTMYEFDKSFGSYRYIAGVDEVGRGPLAGPIVACSVILDLNVLEKDLILYINDSKKVKEHKREELSEIIKEKALSYQIAVSSNKEIDEKGIAFANNKVFLESCNSLSIKPDLVLSDGYLIKNIGIENKSVIKGDTKSASIAAASIVAKVYRDRLMKEYAKKYPHYDFENNVGYGTSKHIEGLKKYGKSDIHRNSFLTKLL.

Positions 84-270 (RYIAGVDEVG…HRNSFLTKLL (187 aa)) constitute an RNase H type-2 domain. Residues aspartate 90, glutamate 91, and aspartate 186 each contribute to the a divalent metal cation site.

This sequence belongs to the RNase HII family. Mn(2+) serves as cofactor. Mg(2+) is required as a cofactor.

It is found in the cytoplasm. It catalyses the reaction Endonucleolytic cleavage to 5'-phosphomonoester.. Endonuclease that specifically degrades the RNA of RNA-DNA hybrids. The polypeptide is Ribonuclease HII (Clostridium beijerinckii (strain ATCC 51743 / NCIMB 8052) (Clostridium acetobutylicum)).